Reading from the N-terminus, the 190-residue chain is Transcription factor bHLH162 (190 aa).

The segment covering 1–12 (MEPSHSNTGQSR) has biased composition (polar residues). The tract at residues 1 to 21 (MEPSHSNTGQSRSVDRKTVEK) is disordered. The 53-residue stretch at 11–63 (SRSVDRKTVEKNRRMQMKSLYSELISLLPHHSSTEPLTLPDQLDEAANYIKKL) folds into the bHLH domain.

This sequence belongs to the bHLH protein family.

The protein localises to the nucleus. This is Transcription factor bHLH162 from Arabidopsis thaliana (Mouse-ear cress).